A 485-amino-acid polypeptide reads, in one-letter code: Protein DETOXIFICATION 8 (485 aa).

A disordered region spans residues 1–26 (MENGFSLVPKEEEEEEDYSNEKSEDQ). 12 helical membrane passes run 41–61 (FMAA…VISI), 74–94 (AVAI…FGLA), 118–138 (YGSM…WVFM), 159–179 (SIWL…TRFF), 188–208 (LFLS…LLVY), 212–232 (FGIV…VGLL), 263–283 (LAIP…LLIL), 297–317 (VLSI…AIGA), 338–358 (AANS…ISLY), 381–401 (ITPF…LSGV), 414–434 (ANIG…CFVV), and 442–462 (WIGI…VTFF).

The protein belongs to the multi antimicrobial extrusion (MATE) (TC 2.A.66.1) family.

Its subcellular location is the membrane. This chain is Protein DETOXIFICATION 8, found in Arabidopsis thaliana (Mouse-ear cress).